Consider the following 339-residue polypeptide: Phosphoribosylformylglycinamidine cyclo-ligase (339 aa).

This sequence belongs to the AIR synthase family.

The protein localises to the cytoplasm. The enzyme catalyses 2-formamido-N(1)-(5-O-phospho-beta-D-ribosyl)acetamidine + ATP = 5-amino-1-(5-phospho-beta-D-ribosyl)imidazole + ADP + phosphate + H(+). The protein operates within purine metabolism; IMP biosynthesis via de novo pathway; 5-amino-1-(5-phospho-D-ribosyl)imidazole from N(2)-formyl-N(1)-(5-phospho-D-ribosyl)glycinamide: step 2/2. The chain is Phosphoribosylformylglycinamidine cyclo-ligase from Fusobacterium nucleatum subsp. nucleatum (strain ATCC 25586 / DSM 15643 / BCRC 10681 / CIP 101130 / JCM 8532 / KCTC 2640 / LMG 13131 / VPI 4355).